We begin with the raw amino-acid sequence, 294 residues long: MKQTTIAKKVTSVGIGLHKGEPIRLTIEPSSENTGIIFYRSDLGISFKAEPKNVVNTQMATVIGNQKGYISTVEHILSAINGYGIDNIRINVDANEIPVMDGSSISFCMMLDEAGIKNLDASKKAIIIKREVEVKEGEKFVRVSPSKSPKFDYTIKFSNPIIGTQQFAFEFSRKNYVDEIARARTFGFLKDVQMLRSMNLALGGSLENAVVIDDNKILNPDGLRYENEFVRHKILDAIGDLSLLGAPILGDYTAYAASHDLNHKLTLAILTDAKNYEMVSIDEQIAHEYAKIFA.

Zn(2+) is bound by residues His-75, His-232, and Asp-236. His-259 functions as the Proton donor in the catalytic mechanism.

The protein belongs to the LpxC family. Requires Zn(2+) as cofactor.

It carries out the reaction a UDP-3-O-[(3R)-3-hydroxyacyl]-N-acetyl-alpha-D-glucosamine + H2O = a UDP-3-O-[(3R)-3-hydroxyacyl]-alpha-D-glucosamine + acetate. Its pathway is glycolipid biosynthesis; lipid IV(A) biosynthesis; lipid IV(A) from (3R)-3-hydroxytetradecanoyl-[acyl-carrier-protein] and UDP-N-acetyl-alpha-D-glucosamine: step 2/6. Catalyzes the hydrolysis of UDP-3-O-myristoyl-N-acetylglucosamine to form UDP-3-O-myristoylglucosamine and acetate, the committed step in lipid A biosynthesis. This Campylobacter hominis (strain ATCC BAA-381 / DSM 21671 / CCUG 45161 / LMG 19568 / NCTC 13146 / CH001A) protein is UDP-3-O-acyl-N-acetylglucosamine deacetylase.